We begin with the raw amino-acid sequence, 1052 residues long: MSTWSSMLADLKKRAEEAKRQAKKGYDVTKNGLQYGVSQAKLQALAAGKAVQKYGNKLVLVIPKEYDGSVGNGFFDLVKAAEELGIQVKYVNRNELEVAHKSLGTADQFLGLTERGLTLFAPQLDQFLQKHSKISNVVGSSTGDAVSKLAKSQTIISGIQSVLGTVLAGINLNEAIISGGSELELAEAGVSLASELVSNIAKGTTTIDAFTTQIQNFGKLVENAKGLGGVGRQLQNISGSALSKTGLGLDIISSLLSGVTASFALANKNASTSTKVAAGFELSNQVIGGITKAVSSYILAQRLAAGLSTTGPAAALIASSISLAISPLAFLRVADNFNRSKEIGEFAERFKKLGYDGDKLLSEFYHEAGTIDASITTISTALSAIAAGTAAASAGALVGAPITLLVTGITGLISGILEFSKQPMLDHVASKIGNKIDEWEKKYGKNYFENGYDARHKAFLEDSFSLLSSFNKQYETERAVLITQQRWDEYIGELAGITGKGDKLSSGKAYVDYFQEGKLLEKKPDDFSKVVFDPTKGEIDISNSQTSTLLKFVTPLLTPGTESRERTQTGKYEYITKLVVKGKDKWVVNGVKDKGAVYDYTNLIQHAHISSSVARGEEYREVRLVSHLGNGNDKVFLAAGSAEIHAGEGHDVVYYDKTDTGLLVIDGTKATEQGRYSVTRELSGATKILREVIKNQKSAVGKREETLEYRDYELTQSGNSNLKAHDELHSVEEIIGSNQRDEFKGSKFRDIFHGADGDDLLNGNDGDDILYGDKGNDELRGDNGNDQLYGGEGNDKLLGGNGNNYLSGGDGNDELQVLGNGFNVLRGGKGDDKLYGSSGSDLLDGGEGNDYLEGGDGSDFYVYRSTSGNHTIYDQGKSSDLDKLYLSDFSFDRLLVEKVDDNLVLRSNESSHNNGVLTIKDWFKEGNKYNHKIEQIVDKNGRKLTAENLGTYFKNAPKADNLLNYATKEDQNESNLSSLKTELSKIITNAGNFGVAKQGNTGINTAALNNEVNKIISSANTFATSQLGGSGMGTLPSTNVNSMMLGNLARAA.

3 helical membrane passes run 248 to 265 (GLDI…SFAL), 275 to 334 (KVAA…LRVA), and 372 to 418 (DASI…GILE). Hemolysin-type calcium-binding repeat units follow at residues 744–761 (KGSK…DDLL), 762–779 (NGND…NDEL), 780–797 (RGDN…NDKL), 798–815 (LGGN…NDEL), 826–843 (RGGK…SDLL), and 844–861 (DGGE…SDFY).

Belongs to the RTX prokaryotic toxin (TC 1.C.11) family. Post-translationally, palmitoylated by ApxIIIC. The toxin only becomes active when modified.

It localises to the secreted. The protein localises to the host cell membrane. Functionally, does not have hemolytic activity but shows a strong cytotoxicity towards alveolar macrophages and neutrophils. The protein is RTX-III toxin determinant A from serotype 8 (apxIIIA) of Actinobacillus pleuropneumoniae (Haemophilus pleuropneumoniae).